Reading from the N-terminus, the 484-residue chain is Secreted RxLR effector protein 104 (484 aa).

Positions 1-24 are cleaved as a signal peptide; that stretch reads MRSAYPVLTALLVVASSQIAAGSG. A RxLR-dEER motif is present at residues 48-65; sequence RFLRGSRDVHNNVANEER. N175 is a glycosylation site (N-linked (GlcNAc...) asparagine). The interval 324–463 is disordered; it reads ENPKGQSPYP…SSSVLTPEDV (140 aa). The span at 327–346 shows a compositional bias: polar residues; it reads KGQSPYPSTPLTAASTSKGG. Residues 402–413 show a composition bias toward low complexity; the sequence is SSSSGPSRAFAP. Residues 418–428 are compositionally biased toward polar residues; it reads DQTFITENSRL.

This sequence belongs to the RxLR effector family.

The protein localises to the secreted. The protein resides in the host nucleus. Its function is as follows. Secreted effector that completely suppresses the host cell death induced by cell death-inducing proteins. The chain is Secreted RxLR effector protein 104 from Plasmopara viticola (Downy mildew of grapevine).